Consider the following 1938-residue polypeptide: MGVKKKREMQVAALTVCHQDMETLRSFADMEGKNLASLLLHCVQLTDGVSQIHSIKQIVPLLEKVDKNGVCDPAIQSCLDILAGIYFSLTLKNPLKKVLASSLNGLPEVFLTQATHSFTFHLQEELDTADLYSYRKVMDNISSCMENFNLGRASVVNLLKDVLHFLQKSLIEILEENRKFAGNRIVQTQLMSDLLVGVRVAMTLVQKVQGPQGSLWNDSSSPIWQSMCGLLSIFTKFLNDDDLLQTVESTSGLAVILFIKTMFRPSEKLPGLISSLLLRSAECTSIPEWLMNSCRSLCCTDVPASTLLFLCQGTLAMLDWQDGSMGPSGEALLLDIVHVLFTLSSQIKESTLDMFLSRILASWTSSAIQILESGSSGLKGHLNGDSCVPRRLLEYVYTHWEHPLDALRHQTKVMFRNLLQMHRLTMEGADLATDPFCLELTKSLLQLEWHIKGKYACLGCLVETLGIEHILAIDKTIPSQILEVMGDQSLVPYASDLLETMFKNHKSHLKSQTVTNTWMDKWHETWVFPVLSVLCGGNLDQRSYVIDYYLPRILNYSPESLHYMVHILQASTDTGTGSCNHRGALGALMACLRTARAHGHLQSATQAWENLVCSARVKQGLIHQHCQVRIDTLGLLCESNRSTEVVSTEEMQWVQFFITYNLNSQSPGVRQQICSLLKKLFCRIQESSQVLYKLEQRKSTPDSENGSIREQPSVTLQQYKNFMSSVCNILFEALFPGSSYSTRFSALTILGSVAEVFPDPEGNIQTVYQLSHDIDAGRYQILMECFTSTFEEVKTLAFDLLMKLSSVTAGQFQDSEKLQDLFQAALELSTSTKPYDCVTASYLLNLLIRQDALPAVLSASSPQQLTRGAGETSAVLERNTLVVIKCLMENLEDEISQAENSLLQAASSFPMYGRVHCITRAFQRLPLNDLRLASEWRPLLGRLLLLSYRLSTVVAPVIQSSSPEGLIPVDTDSASASRLQLILNEIQPRDTNDYFNHTKILKECDSFDLEDLSTSVSNIDSSAEVKGKEEKACDVTAQMVLACCWRSMKEVALLLGTLCQLLPVQPGPESSNVFLTVQQVKEIGDYFKQHLLQSRHRGAFELAYTGFVKLTEILNRCSNVSLQKLPEQWLRSVLEEIKGSDPSSKLCATRRSAGIPFYIQALLASEPKKSRMDLLKITMRELISLALSADDSKGRVPQVHALNILRALFRDTRLGENIIPYVAGGAKAAILGFTSPVWAVRNSSTLLFSSLITRVFGVKRGKDEVSKTNRMTGREFFSRFPELYPFLLKQLETVASTVDSELGEPDRHPGMFLLLLVLERLYPSPMDGTSSALSLAPFVPFIIRCGRSPIYRSREMAARALVPFIMIDQIPSTLCALLNSLPNSTDQCFRQNHIHGTLLQVFHLLQAYITDCRHRTNADFLQELSDVTACTKAKLWLAMRQNPCLVTRAVYIDILFLLTNCLDRPEEGKQTALESLGFWEDVRRIILESELIKGFPWTFKVPGLPQYLQSLTKLAIPEVWASLAEAKGQATAVPLSFSRLLKSSFPEVRLLALDTLLERARSSEQEQKEPLPLLCSMGEELLLLAMKEDHPGCFCRVLKILYHLNPSEWLPQTECYAHLSPKEFLMWSMDIASNDRSEIQGVALKLASKIIAYRVQSCEKNKDSLAPELRQWVQLVVWSCGDHLPTASRLAVAEVLTSTAPLFLTSPQPILELQGTLSLWRCVLTLLQSEEQTVREAATEIVTTAMSQGNTCQSTEFAFCQVDASIALTLALAVLCDLLQQWDQLEPGLPILLGWLLEEGDDLEGHVQSPHQGEEEHIFEKSEVNFWAETLTFVKSLCRQLFHLLCQSGWQSPHSQKLCHLQRIASEQSHLISQLFRELPLSAEFLKTVEYTRLRIQEERTLAVLRLLACLEGKEGLRAEDCPREWRQVMAPRTEAAC.

A coiled-coil region spans residues 877 to 909; the sequence is ERNTLVVIKCLMENLEDEISQAENSLLQAASSF. A phosphoserine mark is found at Ser1006, Ser1015, and Ser1152.

It belongs to the THADA family.

Its function is as follows. Together with methyltransferase FTSJ1, methylates the 2'-O-ribose of nucleotides at position 32 of the anticodon loop of substrate tRNAs. This chain is tRNA (32-2'-O)-methyltransferase regulator THADA (Thada), found in Mus musculus (Mouse).